A 200-amino-acid polypeptide reads, in one-letter code: Phospholipase A2 inhibitor LNF1 (200 aa).

Residues 1–19 form the signal peptide; that stretch reads MKYLHTICLLFIFVARGNS. Intrachain disulfides connect cysteine 22-cysteine 46, cysteine 25-cysteine 32, cysteine 39-cysteine 67, cysteine 73-cysteine 94, cysteine 95-cysteine 100, cysteine 118-cysteine 143, cysteine 136-cysteine 165, and cysteine 169-cysteine 191. Asparagine 176 carries an N-linked (GlcNAc...) asparagine glycan.

Belongs to the CNF-like-inhibitor family. Occurs as a mixture of oligomers. Tetrameric arrangement appears to be the predominant quaternary structure. Expressed by the liver.

It is found in the secreted. In terms of biological role, inhibits the enzymatic activity of phospholipase A2 (PA2). The protein is Phospholipase A2 inhibitor LNF1 of Lachesis muta muta (Bushmaster).